The primary structure comprises 329 residues: o-succinylbenzoate synthase (329 aa).

K140 serves as the catalytic Proton donor. The Mg(2+) site is built by D168, E197, and D220. K242 functions as the Proton acceptor in the catalytic mechanism.

This sequence belongs to the mandelate racemase/muconate lactonizing enzyme family. MenC type 1 subfamily. A divalent metal cation is required as a cofactor.

The catalysed reaction is (1R,6R)-6-hydroxy-2-succinyl-cyclohexa-2,4-diene-1-carboxylate = 2-succinylbenzoate + H2O. It functions in the pathway quinol/quinone metabolism; 1,4-dihydroxy-2-naphthoate biosynthesis; 1,4-dihydroxy-2-naphthoate from chorismate: step 4/7. The protein operates within quinol/quinone metabolism; menaquinone biosynthesis. In terms of biological role, converts 2-succinyl-6-hydroxy-2,4-cyclohexadiene-1-carboxylate (SHCHC) to 2-succinylbenzoate (OSB). This is o-succinylbenzoate synthase from Haemophilus influenzae (strain ATCC 51907 / DSM 11121 / KW20 / Rd).